The chain runs to 232 residues: Ribose-5-phosphate isomerase A (232 aa).

Substrate is bound by residues 28–31 (TGST), 83–86 (DGAD), and 96–99 (KGGG). Glutamate 105 (proton acceptor) is an active-site residue. Lysine 123 serves as a coordination point for substrate.

The protein belongs to the ribose 5-phosphate isomerase family. Homodimer.

It catalyses the reaction aldehydo-D-ribose 5-phosphate = D-ribulose 5-phosphate. The protein operates within carbohydrate degradation; pentose phosphate pathway; D-ribose 5-phosphate from D-ribulose 5-phosphate (non-oxidative stage): step 1/1. Its function is as follows. Catalyzes the reversible conversion of ribose-5-phosphate to ribulose 5-phosphate. This Rhodopseudomonas palustris (strain BisB5) protein is Ribose-5-phosphate isomerase A.